The sequence spans 404 residues: Cysteine desulfurase IscS (404 aa).

Pyridoxal 5'-phosphate-binding positions include 75-76, Asn-155, Gln-183, and 203-205; these read AT and SAH. The residue at position 206 (Lys-206) is an N6-(pyridoxal phosphate)lysine. Thr-243 serves as a coordination point for pyridoxal 5'-phosphate. Cys-328 acts as the Cysteine persulfide intermediate in catalysis. Cys-328 is a binding site for [2Fe-2S] cluster.

It belongs to the class-V pyridoxal-phosphate-dependent aminotransferase family. NifS/IscS subfamily. Homodimer. Forms a heterotetramer with IscU, interacts with other sulfur acceptors. The cofactor is pyridoxal 5'-phosphate.

It is found in the cytoplasm. The catalysed reaction is (sulfur carrier)-H + L-cysteine = (sulfur carrier)-SH + L-alanine. The protein operates within cofactor biosynthesis; iron-sulfur cluster biosynthesis. Its function is as follows. Master enzyme that delivers sulfur to a number of partners involved in Fe-S cluster assembly, tRNA modification or cofactor biosynthesis. Catalyzes the removal of elemental sulfur atoms from cysteine to produce alanine. Functions as a sulfur delivery protein for Fe-S cluster synthesis onto IscU, an Fe-S scaffold assembly protein, as well as other S acceptor proteins. The sequence is that of Cysteine desulfurase IscS from Tolumonas auensis (strain DSM 9187 / NBRC 110442 / TA 4).